The chain runs to 518 residues: GMP synthase [glutamine-hydrolyzing] (518 aa).

A Glutamine amidotransferase type-1 domain is found at 8-201 (TVLIIDFGSQ…VCKISGIKNN (194 aa)). The active-site Nucleophile is Cys85. Residues His175 and Glu177 contribute to the active site. The 192-residue stretch at 202-393 (WSMAAYRDQA…LGLPEEFIKR (192 aa)) folds into the GMPS ATP-PPase domain. Residue 229–235 (SGGVDSS) coordinates ATP.

As to quaternary structure, homodimer.

The enzyme catalyses XMP + L-glutamine + ATP + H2O = GMP + L-glutamate + AMP + diphosphate + 2 H(+). The protein operates within purine metabolism; GMP biosynthesis; GMP from XMP (L-Gln route): step 1/1. In terms of biological role, catalyzes the synthesis of GMP from XMP. The polypeptide is GMP synthase [glutamine-hydrolyzing] (Bartonella bacilliformis (strain ATCC 35685 / KC583 / Herrer 020/F12,63)).